The primary structure comprises 175 residues: Co-chaperone protein HscB homolog (175 aa).

The 73-residue stretch at 7-79 (SHFELFHLPA…LKRATYLLHL (73 aa)) folds into the J domain.

It belongs to the HscB family. In terms of assembly, interacts with HscA and stimulates its ATPase activity.

Its function is as follows. Co-chaperone involved in the maturation of iron-sulfur cluster-containing proteins. Seems to help targeting proteins to be folded toward HscA. The chain is Co-chaperone protein HscB homolog from Burkholderia thailandensis (strain ATCC 700388 / DSM 13276 / CCUG 48851 / CIP 106301 / E264).